Here is a 110-residue protein sequence, read N- to C-terminus: UPF0060 membrane protein Pcryo_1341 (110 aa).

4 helical membrane passes run 7–27 (VGLF…PYLW), 33–53 (SIWL…LLTL), 63–83 (AAYG…VDGI), and 87–107 (TWDI…MFAP).

This sequence belongs to the UPF0060 family.

The protein localises to the cell inner membrane. This Psychrobacter cryohalolentis (strain ATCC BAA-1226 / DSM 17306 / VKM B-2378 / K5) protein is UPF0060 membrane protein Pcryo_1341.